We begin with the raw amino-acid sequence, 478 residues long: uncharacterized protein (478 aa).

Positions 174–366 (RQVLAAAGVP…LIGEHIKLAI (193 aa)) constitute an ATP-grasp domain. Residue 214–219 (GSGSRG) coordinates ATP. Arg339 is an active-site residue.

This is an uncharacterized protein from Sinorhizobium fredii (strain NBRC 101917 / NGR234).